A 372-amino-acid polypeptide reads, in one-letter code: Innexin-16 (372 aa).

The next 4 helical transmembrane spans lie at 31–51 (VVTTSILIAFSLLLFAKNYVG), 106–126 (VPFLLVIQALFFCVPRAFWII), 181–201 (LVMKLLILLNIVLQFFLLNSF), and 263–283 (IFIFLWFWFAFLLVATAGDFV). An N-linked (GlcNAc...) asparagine glycan is attached at Asn352.

This sequence belongs to the pannexin family.

Its subcellular location is the cell membrane. It is found in the cell junction. It localises to the gap junction. Functionally, structural component of the gap junctions. Required for signals downstream of defecation clock. The protein is Innexin-16 (inx-16) of Caenorhabditis elegans.